The primary structure comprises 389 residues: Teichoic acid glycerol-phosphate transferase (389 aa).

This sequence belongs to the CDP-glycerol glycerophosphotransferase family.

The protein resides in the cell membrane. It carries out the reaction 4-O-[(2R)-glycerylphospho]-N-acetyl-beta-D-mannosaminyl-(1-&gt;4)-N-acetyl-alpha-D-glucosaminyl di-trans,octa-cis-undecaprenyl diphosphate + CDP-glycerol = 4-O-[di(2R)-glycerylphospho]-N-acetyl-beta-D-mannosaminyl-(1-&gt;4)-N-acetyl-alpha-D-glucosaminyl di-trans,octa-cis-undecaprenyl diphosphate + CMP + H(+). Its pathway is cell wall biogenesis; poly(ribitol phosphate) teichoic acid biosynthesis. In terms of biological role, catalyzes the addition of a second glycerol phosphate unit from CDP-glycerol to the prenolpyrophosphate-linked disaccharide, to complete the linkage unit. This Staphylococcus aureus (strain NCTC 8325 / PS 47) protein is Teichoic acid glycerol-phosphate transferase (tarF).